Reading from the N-terminus, the 152-residue chain is SsrA-binding protein (152 aa).

A disordered region spans residues 124–152 (KKLHDKRDTAAERDWQRDKARLMKGDRGD). A compositionally biased stretch (basic and acidic residues) spans 128 to 152 (DKRDTAAERDWQRDKARLMKGDRGD).

The protein belongs to the SmpB family.

The protein localises to the cytoplasm. Functionally, required for rescue of stalled ribosomes mediated by trans-translation. Binds to transfer-messenger RNA (tmRNA), required for stable association of tmRNA with ribosomes. tmRNA and SmpB together mimic tRNA shape, replacing the anticodon stem-loop with SmpB. tmRNA is encoded by the ssrA gene; the 2 termini fold to resemble tRNA(Ala) and it encodes a 'tag peptide', a short internal open reading frame. During trans-translation Ala-aminoacylated tmRNA acts like a tRNA, entering the A-site of stalled ribosomes, displacing the stalled mRNA. The ribosome then switches to translate the ORF on the tmRNA; the nascent peptide is terminated with the 'tag peptide' encoded by the tmRNA and targeted for degradation. The ribosome is freed to recommence translation, which seems to be the essential function of trans-translation. This chain is SsrA-binding protein, found in Caulobacter vibrioides (strain ATCC 19089 / CIP 103742 / CB 15) (Caulobacter crescentus).